Consider the following 390-residue polypeptide: RNA binding protein fox-1 homolog 2 (390 aa).

The tract at residues 1-127 is disordered; that stretch reads MQNEPLTPGY…STPKRLHVSN (127 aa). Composition is skewed to polar residues over residues 18–28 and 65–95; these read SQGNQEPTTTP and GEHN…SLTT. A Phosphothreonine modification is found at histidine 67. A compositionally biased stretch (low complexity) spans 97–117; it reads GGAQTDGQQSQTQSSENSESK. The RRM domain maps to 121 to 197; it reads KRLHVSNIPF…RKIEVNNATA (77 aa). Omega-N-methylarginine occurs at positions 249, 267, 268, 277, and 281. Asymmetric dimethylarginine occurs at positions 297 and 329. 2 positions are modified to asymmetric dimethylarginine; alternate: arginine 381 and arginine 386. Omega-N-methylarginine; alternate occurs at positions 381 and 386.

As to quaternary structure, interacts with ER-alpha N-terminal activation domain. Interacts with RBPMS; the interaction allows cooperative assembly of stable cell-specific alternative splicing regulatory complexes.

It localises to the nucleus. The protein resides in the cytoplasm. Functionally, RNA-binding protein that regulates alternative splicing events by binding to 5'-UGCAUGU-3' elements. Prevents binding of U2AF2 to the 3'-splice site. Regulates alternative splicing of tissue-specific exons and of differentially spliced exons during erythropoiesis. RNA-binding protein that seems to act as a coregulatory factor of ER-alpha. Together with RNA binding proteins RBPMS and MBNL1/2, activates vascular smooth muscle cells alternative splicing events. This Homo sapiens (Human) protein is RNA binding protein fox-1 homolog 2 (RBFOX2).